The primary structure comprises 212 residues: External core antigen (212 aa).

Positions 1 to 19 (MQLFHLCLIISCSCPTVQA) are cleaved as a signal peptide. The HBEAG stretch occupies residues 25–27 (GWL). Residues 165-212 (NAPILSTLPETTVVRRRGRSPRRRTPSPRRRRSQSPRRRRSQSRESQC) are disordered. Residues 178–205 (VRRRGRSPRRRTPSPRRRRSQSPRRRRS) are compositionally biased toward basic residues. A 1; half-length repeat occupies 184–190 (SPRRRTP). The interval 184–206 (SPRRRTPSPRRRRSQSPRRRRSQ) is 3 X 8 AA repeats of S-P-R-R-R-R-S-Q. Residues 184–212 (SPRRRTPSPRRRRSQSPRRRRSQSRESQC) constitute a propeptide that is removed on maturation. A run of 2 repeats spans residues 191 to 198 (SPRRRRSQ) and 199 to 206 (SPRRRRSQ).

It belongs to the orthohepadnavirus precore antigen family. Homodimerizes. Phosphorylated. In terms of processing, cleaved by host furin.

The protein resides in the secreted. It is found in the host nucleus. Its function is as follows. May regulate immune response to the intracellular capsid in acting as a T-cell tolerogen, by having an immunoregulatory effect which prevents destruction of infected cells by cytotoxic T-cells. This immune regulation may predispose to chronicity during perinatal infections and prevent severe liver injury during adult infections. The protein is External core antigen of Homo sapiens (Human).